A 157-amino-acid polypeptide reads, in one-letter code: MSMTLVAEHYTKIIATKLLETLSSNVSRKGFVEGNPCFERVVQFIEENVKRSISLEQLAELALMSPRSLYTMFEKHTGTTPMNYIRNRKLECVRACLSNPTTNIRSITEVALDYGFLHLGRFAEKYRSTFGELPSDTLSLHKMKCIDSRESSLSSLF.

The HTH araC/xylS-type domain occupies 39–140; it reads ERVVQFIEEN…GELPSDTLSL (102 aa). DNA-binding regions (H-T-H motif) lie at residues 56–77 and 107–130; these read EQLA…EKHT and ITEV…RSTF.

The protein resides in the cytoplasm. Its function is as follows. Regulatory protein of the TOL plasmid xyl operons. XylS activates the xylXYZLTEGFJQKIH operon required for the degradation of toluene, m-xylene and p-xylene. In Pseudomonas putida (Arthrobacter siderocapsulatus), this protein is XylDLEGF operon transcriptional activator 2 (xylS2).